The sequence spans 458 residues: tRNA modification GTPase MnmE (458 aa).

Residues arginine 22, glutamate 84, and arginine 123 each contribute to the (6S)-5-formyl-5,6,7,8-tetrahydrofolate site. A TrmE-type G domain is found at 220–379 (GIATAIIGRP…LEKAIADLFF (160 aa)). Position 230 (asparagine 230) interacts with K(+). GTP contacts are provided by residues 230–235 (NVGKSS), 249–255 (TDIAGTT), and 274–277 (DTAG). Serine 234 is a binding site for Mg(2+). The K(+) site is built by threonine 249, isoleucine 251, and threonine 254. Threonine 255 lines the Mg(2+) pocket. Position 458 (lysine 458) interacts with (6S)-5-formyl-5,6,7,8-tetrahydrofolate.

The protein belongs to the TRAFAC class TrmE-Era-EngA-EngB-Septin-like GTPase superfamily. TrmE GTPase family. As to quaternary structure, homodimer. Heterotetramer of two MnmE and two MnmG subunits. It depends on K(+) as a cofactor.

The protein localises to the cytoplasm. In terms of biological role, exhibits a very high intrinsic GTPase hydrolysis rate. Involved in the addition of a carboxymethylaminomethyl (cmnm) group at the wobble position (U34) of certain tRNAs, forming tRNA-cmnm(5)s(2)U34. The protein is tRNA modification GTPase MnmE of Bacillus anthracis.